A 105-amino-acid polypeptide reads, in one-letter code: Met repressor (105 aa).

It belongs to the MetJ family. Homodimer.

It localises to the cytoplasm. In terms of biological role, this regulatory protein, when combined with SAM (S-adenosylmethionine) represses the expression of the methionine regulon and of enzymes involved in SAM synthesis. This chain is Met repressor, found in Actinobacillus pleuropneumoniae serotype 7 (strain AP76).